Consider the following 371-residue polypeptide: Chaperone protein DnaJ (371 aa).

The 65-residue stretch at 5–69 (DYYEVLGLSK…QKRAQYDQFG (65 aa)) folds into the J domain. The segment at 133 to 215 (GKELNVEIPV…CHGSGKVRKR (83 aa)) adopts a CR-type zinc-finger fold. Cysteine 146, cysteine 149, cysteine 163, cysteine 166, cysteine 189, cysteine 192, cysteine 203, and cysteine 206 together coordinate Zn(2+). 4 CXXCXGXG motif repeats span residues 146–153 (CDTCKGSG), 163–170 (CKHCSGSG), 189–196 (CGHCSGTG), and 203–210 (CTTCHGSG).

It belongs to the DnaJ family. In terms of assembly, homodimer. It depends on Zn(2+) as a cofactor.

Its subcellular location is the cytoplasm. Functionally, participates actively in the response to hyperosmotic and heat shock by preventing the aggregation of stress-denatured proteins and by disaggregating proteins, also in an autonomous, DnaK-independent fashion. Unfolded proteins bind initially to DnaJ; upon interaction with the DnaJ-bound protein, DnaK hydrolyzes its bound ATP, resulting in the formation of a stable complex. GrpE releases ADP from DnaK; ATP binding to DnaK triggers the release of the substrate protein, thus completing the reaction cycle. Several rounds of ATP-dependent interactions between DnaJ, DnaK and GrpE are required for fully efficient folding. Also involved, together with DnaK and GrpE, in the DNA replication of plasmids through activation of initiation proteins. The chain is Chaperone protein DnaJ from Bacillus cereus (strain ATCC 10987 / NRS 248).